Reading from the N-terminus, the 500-residue chain is MANKKIRVRYAPSPTGHLHIGNARTALFNYLFARHNKGTLVLRIEDTDTARNVEGGAESQIENLHWLGIDWDEGPDIGGDYGPYKQSERKDIYQKYIDQLLEEGKAYYSFKTEEELEAQREEQRAMGIAPHYVYEYEGMTTDEIKQAQDEARAKGLKPVVRIHIPEGVTYEWDDIVKGHLSFESDTIGGDFVIQKRDGMPTYNFAVVIDDHLMEISHVLRGDDHISNTPKQLCVYEALGWEAPVFGHMTLIINSATGKKLSKRDESVLQFIEQYRELGFLPEAMFNFITLLGWSPVGESEIFSKREFIKQFDPARLSKSPAAFDQKKLDWVNNQYMKTADRDELLDLALHNLQEAGLVEANPAPGKMEWVRQLVNMYANQMSYTKQIVDLSKIFFTEAKYLTDEEVEEIKKDEARPAIEEFKKQLDKLDNFTAKKIMDAIMATRRETGIKGRKLFMPIRIATTRSMVGPGIGEAMELMGKDTVMKHLDLTLKQLSEAGIE.

Residues 12 to 22 (PSPTGHLHIGN) carry the 'HIGH' region motif. The 'KMSKS' region signature appears at 259 to 263 (KLSKR). Lys-262 serves as a coordination point for ATP.

The protein belongs to the class-I aminoacyl-tRNA synthetase family. Glutamate--tRNA ligase type 1 subfamily. In terms of assembly, monomer.

It localises to the cytoplasm. It carries out the reaction tRNA(Glu) + L-glutamate + ATP = L-glutamyl-tRNA(Glu) + AMP + diphosphate. Catalyzes the attachment of glutamate to tRNA(Glu) in a two-step reaction: glutamate is first activated by ATP to form Glu-AMP and then transferred to the acceptor end of tRNA(Glu). The sequence is that of Glutamate--tRNA ligase from Lactobacillus delbrueckii subsp. bulgaricus (strain ATCC BAA-365 / Lb-18).